The primary structure comprises 353 residues: Quinolinate synthase (353 aa).

Iminosuccinate contacts are provided by H47 and S68. [4Fe-4S] cluster is bound at residue C113. Iminosuccinate is bound by residues 139–141 (YAN) and S156. C200 is a binding site for [4Fe-4S] cluster. Iminosuccinate is bound by residues 226–228 (HPE) and T243. Residue C297 coordinates [4Fe-4S] cluster.

It belongs to the quinolinate synthase family. Type 1 subfamily. The cofactor is [4Fe-4S] cluster.

Its subcellular location is the cytoplasm. The catalysed reaction is iminosuccinate + dihydroxyacetone phosphate = quinolinate + phosphate + 2 H2O + H(+). It functions in the pathway cofactor biosynthesis; NAD(+) biosynthesis; quinolinate from iminoaspartate: step 1/1. Its function is as follows. Catalyzes the condensation of iminoaspartate with dihydroxyacetone phosphate to form quinolinate. This is Quinolinate synthase from Vibrio parahaemolyticus serotype O3:K6 (strain RIMD 2210633).